A 377-amino-acid chain; its full sequence is Transmembrane 6 superfamily member 2 (377 aa).

The next 9 helical transmembrane spans lie at 10-30 (IAALSLSALPVSYALNHVSAL), 34-54 (LWVALMSALILGLLFVAVYSL), 63-83 (PLYAVFAVFAFTSVVDLIIAL), 111-131 (FICYWDGTVHYLLYLAMAGAI), 140-160 (FGLYWLGSFAMSILVFLTGNI), 170-190 (PAFFLTIPYLLVPCWAGMKVF), 219-239 (LALVIYLILAGFFTLFRGLVV), 269-289 (MLMYMFYVLPFCGLAAYALTF), and 332-352 (TWGCFFVCNLLYALGPHLLAY). 2 EXPERA domains span residues 61 to 186 (YDPL…CWAG) and 217 to 351 (ADLA…HLLA).

The protein belongs to the TM6SF family. In terms of tissue distribution, substantial expression in liver and intestine, whereas all other tissues analyzed show low levels.

It is found in the endoplasmic reticulum membrane. The protein localises to the endoplasmic reticulum-Golgi intermediate compartment membrane. In terms of biological role, regulator of liver fat metabolism influencing triglyceride secretion and hepatic lipid droplet content. May function as sterol isomerase. The protein is Transmembrane 6 superfamily member 2 (TM6SF2) of Homo sapiens (Human).